The chain runs to 43 residues: uncharacterized protein (43 aa).

This is an uncharacterized protein from Escherichia coli (Bacteriophage T4).